The sequence spans 275 residues: Dermonecrotic toxin LspiSicTox-betaIE4i (275 aa).

Residues Glu-24 and Asp-26 each contribute to the Mg(2+) site. His-40 acts as the Nucleophile in catalysis. 2 cysteine pairs are disulfide-bonded: Cys-44–Cys-50 and Cys-46–Cys-188. Mg(2+) is bound at residue Asp-84.

This sequence belongs to the arthropod phospholipase D family. Class II subfamily. Mg(2+) is required as a cofactor. As to expression, expressed by the venom gland.

The protein localises to the secreted. It carries out the reaction an N-(acyl)-sphingosylphosphocholine = an N-(acyl)-sphingosyl-1,3-cyclic phosphate + choline. The enzyme catalyses an N-(acyl)-sphingosylphosphoethanolamine = an N-(acyl)-sphingosyl-1,3-cyclic phosphate + ethanolamine. The catalysed reaction is a 1-acyl-sn-glycero-3-phosphocholine = a 1-acyl-sn-glycero-2,3-cyclic phosphate + choline. It catalyses the reaction a 1-acyl-sn-glycero-3-phosphoethanolamine = a 1-acyl-sn-glycero-2,3-cyclic phosphate + ethanolamine. Functionally, dermonecrotic toxins cleave the phosphodiester linkage between the phosphate and headgroup of certain phospholipids (sphingolipid and lysolipid substrates), forming an alcohol (often choline) and a cyclic phosphate. This toxin acts on sphingomyelin (SM). It may also act on ceramide phosphoethanolamine (CPE), lysophosphatidylcholine (LPC) and lysophosphatidylethanolamine (LPE), but not on lysophosphatidylserine (LPS), and lysophosphatidylglycerol (LPG). It acts by transphosphatidylation, releasing exclusively cyclic phosphate products as second products. Induces dermonecrosis, hemolysis, increased vascular permeability, edema, inflammatory response, and platelet aggregation. This chain is Dermonecrotic toxin LspiSicTox-betaIE4i, found in Loxosceles spinulosa (Recluse spider).